Here is a 362-residue protein sequence, read N- to C-terminus: Probable dual-specificity RNA methyltransferase RlmN (362 aa).

Catalysis depends on Glu105, which acts as the Proton acceptor. One can recognise a Radical SAM core domain in the interval His111 to Asp344. A disulfide bond links Cys118 and Cys349. [4Fe-4S] cluster is bound by residues Cys125, Cys129, and Cys132. S-adenosyl-L-methionine contacts are provided by residues Gly175–Glu176, Ser207, Ser230–His232, and Asn306. The S-methylcysteine intermediate role is filled by Cys349.

Belongs to the radical SAM superfamily. RlmN family. [4Fe-4S] cluster is required as a cofactor.

It localises to the cytoplasm. The enzyme catalyses adenosine(2503) in 23S rRNA + 2 reduced [2Fe-2S]-[ferredoxin] + 2 S-adenosyl-L-methionine = 2-methyladenosine(2503) in 23S rRNA + 5'-deoxyadenosine + L-methionine + 2 oxidized [2Fe-2S]-[ferredoxin] + S-adenosyl-L-homocysteine. It catalyses the reaction adenosine(37) in tRNA + 2 reduced [2Fe-2S]-[ferredoxin] + 2 S-adenosyl-L-methionine = 2-methyladenosine(37) in tRNA + 5'-deoxyadenosine + L-methionine + 2 oxidized [2Fe-2S]-[ferredoxin] + S-adenosyl-L-homocysteine. Specifically methylates position 2 of adenine 2503 in 23S rRNA and position 2 of adenine 37 in tRNAs. This chain is Probable dual-specificity RNA methyltransferase RlmN, found in Bacillus anthracis (strain CDC 684 / NRRL 3495).